A 348-amino-acid chain; its full sequence is uncharacterized protein (348 aa).

Positions 41 and 170 each coordinate NADP(+). Ser-339 is modified (phosphoserine).

The protein belongs to the NAD(P)-dependent epimerase/dehydratase family. Dihydroflavonol-4-reductase subfamily.

This is an uncharacterized protein from Saccharomyces cerevisiae (strain ATCC 204508 / S288c) (Baker's yeast).